The following is a 72-amino-acid chain: Conotoxin im23a (72 aa).

Residues 1 to 22 (MIMRMTLTLFVLVVMTAASASG) form the signal peptide. Residues 23–28 (DALTEA) constitute a propeptide that is removed on maturation. 3 disulfides stabilise this stretch: C34–C41, C45–C55, and C56–C71.

Belongs to the conotoxin K superfamily. Expressed by the venom duct.

The protein resides in the secreted. Its function is as follows. Neurotoxin that induces excitatory symptoms in mice following intracranial administration. No symptoms are observed after intraperitoneal and intravenous (tail vein) injections. The protein is Conotoxin im23a of Conus imperialis (Imperial cone).